A 504-amino-acid chain; its full sequence is Cytochrome P450 monooxygenase iccC (504 aa).

A helical membrane pass occupies residues 7 to 26 (LPWILLYTGFLAIFLSRLFS). 4 N-linked (GlcNAc...) asparagine glycosylation sites follow: Asn-134, Asn-312, Asn-365, and Asn-374. Cys-452 contributes to the heme binding site. The N-linked (GlcNAc...) asparagine glycan is linked to Asn-494.

The protein belongs to the cytochrome P450 family. The cofactor is heme.

The protein resides in the membrane. It carries out the reaction (3E,5S)-3-[(2E,4E,8S,10E,12Z)-1-hydroxy-4,8-dimethyltetradeca-2,4,10,12-tetraen-1-ylidene]-5-[(4-hydroxyphenyl)methyl]pyrrolidine-2,4-dione + reduced [NADPH--hemoprotein reductase] + O2 = 3-[(2E,4E,8S,10E,12Z)-4,8-dimethyltetradeca-2,4,10,12-tetraenoyl]-4-hydroxy-5-(4-hydroxyphenyl)-1,2-dihydropyridin-2-one + oxidized [NADPH--hemoprotein reductase] + 2 H2O. The protein operates within mycotoxin biosynthesis. In terms of biological role, cytochrome P450 monooxygenase; part of the gene cluster that mediates the biosynthesis of ilicicolin H, a 4-hydroxy-2-pyridonealkaloid that has potent and broad antifungal activities by inhibiting the mitochondrial respiration chain. IccC catalyzes the ring expansion of the tetramate intermediate to the acyclic 2-pyridone intermediate that contains the trans bis-diene chain. The biosynthesis of ilicicolin H starts with formation of the tetramic acid by the hybrid PKS-NRPS synthetase iccA with the partnering trans-enoyl reductase iccB since iccA lacks a designated enoylreductase (ER) domain. The cytochrome P450 monooxygenase iccC then catalyzes the ring expansion of the tetramate to the acyclic 2-pyridone. The pericyclase iccD further converts the acyclic 2-pyridone into 8-epi-ilicicolin H. Finally, the epimerase iccE converts 8-epi-ilicicolin H into ilicicolin H via epimerization. IccA to iccE are sufficient for ilicicolin H biosynthesis and the roles of the remaining enzymes, iccF, iccG and iccH within the pathway have still to be determined. The sequence is that of Cytochrome P450 monooxygenase iccC from Talaromyces variabilis (Penicillium variabile).